We begin with the raw amino-acid sequence, 333 residues long: Homeobox protein engrailed-1 (333 aa).

Residues 1 to 14 are compositionally biased toward basic and acidic residues; the sequence is MEEPPEGHGHHRDA. Disordered stretches follow at residues 1–184 and 226–247; these read MEEP…AAKY and RPSS…DKRP. Positions 20–31 are enriched in gly residues; that stretch reads ANGGGGGGGGSD. A compositionally biased stretch (pro residues) spans 38-66; sequence SPSPAPASPAAPCPLPLPRRRPPPPPPPR. The segment covering 94 to 104 has biased composition (gly residues); sequence TGAGGGGGGGG. Over residues 144-173 the composition is skewed to low complexity; the sequence is DGSAPAGTAAKANPGTAAGAAGAAGAAKAQ. A DNA-binding region (homeobox) is located at residues 244–303; that stretch reads DKRPRTAFTAEQLQRLKAEFQANRYITEQRRQSLAQELSLNESRVKIWFQNKRAKIKKAT.

The protein belongs to the engrailed homeobox family.

It localises to the nucleus. Its function is as follows. Required for proper formation of the apical ectodermal ridge and correct dorsal-ventral patterning in the limb. This chain is Homeobox protein engrailed-1 (EN1), found in Gallus gallus (Chicken).